We begin with the raw amino-acid sequence, 517 residues long: Cell division cycle protein 73 (517 aa).

A compositionally biased stretch (basic and acidic residues) spans 124–135 (SEPEAKKPRLDG). Disordered regions lie at residues 124-159 (SEPE…SAAK) and 306-326 (GHHA…LAKP). Over residues 315 to 324 (DAPPGRPPLA) the composition is skewed to pro residues.

This sequence belongs to the CDC73 family. Component of the PAF1 complex which consists of at least cdc-73, ctr-9, leo-1, pafo-1 and rtfo-1.

The protein resides in the nucleus. In terms of biological role, component of the PAF1 complex which is a multifunctional complex involved in transcription initiation via genetic interactions with TATA-binding proteins, elongation and transcription-coupled histone modification. In Caenorhabditis elegans, this protein is Cell division cycle protein 73.